The chain runs to 683 residues: Cytoskeleton-associated protein 2 (683 aa).

2 disordered regions span residues 1–28 and 153–175; these read MSTP…QRRQ and NSKK…KKPV. A phosphoserine mark is found at S178 and S190. 2 disordered regions span residues 214–236 and 336–403; these read KATK…SSNM and EKSE…EKPV. Positions 219 to 236 are enriched in polar residues; the sequence is QPVNTSSVTVKSNRSSNM. 2 stretches are compositionally biased toward basic and acidic residues: residues 336–345 and 362–376; these read EKSEPVDQRR and ETSE…EWKA. Residue S534 is modified to Phosphoserine. Phosphothreonine occurs at positions 579 and 582. S595 carries the phosphoserine modification. Residues T596 and T597 each carry the phosphothreonine modification. Y599 bears the Phosphotyrosine mark. At S602 the chain carries Phosphoserine.

It belongs to the CKAP2 family. As to quaternary structure, associates with alpha- and beta-tubulins. Abundant in testis, thymus, and in tumor derived cell lines, while barely detectable in liver, prostate, and kidney.

It is found in the cytoplasm. Its subcellular location is the cytoskeleton. It localises to the spindle. The protein localises to the spindle pole. Possesses microtubule stabilizing properties. Involved in regulating aneuploidy, cell cycling, and cell death in a p53/TP53-dependent manner. In Homo sapiens (Human), this protein is Cytoskeleton-associated protein 2.